A 573-amino-acid polypeptide reads, in one-letter code: Solute carrier family 41 member 2 (573 aa).

Over 1-162 (MTNCKGRSTI…KESSSIMALQ (162 aa)) the chain is Extracellular. The chain crosses the membrane as a helical span at residues 163 to 183 (ILVPFLLAGFGTVTAGMVLDI). Topologically, residues 184-195 (VQHWDVFKNVTE) are cytoplasmic. A helical transmembrane segment spans residues 196–216 (VFILVPALLGLKGNLEMTLAS). The Extracellular segment spans residues 217–245 (RLSTAVNIGKMDSPIEKWNLIIGNLALKQ). The helical transmembrane segment at 246–266 (VQATVVGFLAAVAAVILGWIP) threads the bilayer. Over 267–282 (EGKYSFSHSILLCSSS) the chain is Cytoplasmic. A helical transmembrane segment spans residues 283 to 303 (VATAFIASLLQGIIMVGVIVG). Topologically, residues 304 to 313 (SKKTGINPDN) are extracellular. A helical transmembrane segment spans residues 314 to 334 (VATPIAASFGDLITLAILAWI). Residues 335-347 (SQGLYTCLETYYY) lie on the Cytoplasmic side of the membrane. Residues 348–368 (VSPLVGAFFLALTPMGIVIAA) traverse the membrane as a helical segment. At 369–376 (KHPATRTV) the chain is on the extracellular side. The chain crosses the membrane as a helical span at residues 377 to 397 (LHSGWEPVITAMIISSIGGLI). At 398-406 (LDTTVSDPN) the chain is on the cytoplasmic side. A helical transmembrane segment spans residues 407–427 (LVGIVVYTPVINGIGGNLVAI). Residues 428–469 (QASRISTYLHLHSIPGELPEEAKGCYYPCRTYYGTGVNNKSA) are Extracellular-facing. Residues 470-490 (QVLLLLVIPGHLIFLYTIHLM) traverse the membrane as a helical segment. Topologically, residues 491-499 (KSGHTSLTP) are cytoplasmic. Residues 500–520 (IFIAVYLFAALLQVFTLLWIA) traverse the membrane as a helical segment. The Extracellular portion of the chain corresponds to 521–543 (DWMVHHFWKKGKDPDSFSIPYLT). The helical transmembrane segment at 544 to 564 (ALGDLLGTALLAVGFHFLWLI) threads the bilayer. The Cytoplasmic portion of the chain corresponds to 565 to 573 (GDRDGDVGD).

The protein belongs to the SLC41A transporter family.

The protein localises to the cell membrane. The catalysed reaction is Mg(2+)(in) = Mg(2+)(out). The enzyme catalyses Mn(2+)(in) = Mn(2+)(out). It carries out the reaction Co(2+)(in) = Co(2+)(out). It catalyses the reaction Ni(2+)(in) = Ni(2+)(out). The catalysed reaction is Fe(2+)(in) = Fe(2+)(out). Functionally, acts as a plasma-membrane magnesium transporter. Can also mediate the transport of other divalent metal cations in an order of Ba(2+) &gt; Ni(2+) &gt; Co(2+) &gt; Fe(2+) &gt; Mn(2+). This Gallus gallus (Chicken) protein is Solute carrier family 41 member 2 (SLC41A2).